A 256-amino-acid polypeptide reads, in one-letter code: Pimeloyl-[acyl-carrier protein] methyl ester esterase (256 aa).

The AB hydrolase-1 domain occupies 15–242; it reads HLVLLHGWGL…AAHAPFISHP (228 aa). Residues Trp-22, 82–83, and 143–147 each bind substrate; these read SL and FLALQ. Ser-82 serves as the catalytic Nucleophile. Residues Asp-207 and His-235 contribute to the active site. A substrate-binding site is contributed by His-235.

This sequence belongs to the AB hydrolase superfamily. Carboxylesterase BioH family. In terms of assembly, monomer.

Its subcellular location is the cytoplasm. It catalyses the reaction 6-carboxyhexanoyl-[ACP] methyl ester + H2O = 6-carboxyhexanoyl-[ACP] + methanol + H(+). Its pathway is cofactor biosynthesis; biotin biosynthesis. The physiological role of BioH is to remove the methyl group introduced by BioC when the pimeloyl moiety is complete. It allows to synthesize pimeloyl-ACP via the fatty acid synthetic pathway through the hydrolysis of the ester bonds of pimeloyl-ACP esters. This is Pimeloyl-[acyl-carrier protein] methyl ester esterase from Escherichia coli O81 (strain ED1a).